A 320-amino-acid polypeptide reads, in one-letter code: 1,5-anhydro-D-fructose reductase (320 aa).

NADP(+) is bound at residue Asp-35. The active-site Proton donor is the Tyr-40. A substrate-binding site is contributed by His-102. NADP(+)-binding positions include Gln-194 and 265–277 (IPGS…IKEN).

It belongs to the aldo/keto reductase family. As to quaternary structure, monomer. In terms of tissue distribution, specifically expressed in testis. Expressed in testicular germ cells and testis interstitial cells.

The protein resides in the cytoplasm. It catalyses the reaction 1,5-anhydro-D-glucitol + NADP(+) = 1,5-anhydro-D-fructose + NADPH + H(+). Its activity is regulated as follows. Inhibited by p-chloromercuribenzoic acid and alkyliodines. Its function is as follows. Catalyzes the NADPH-dependent reduction of 1,5-anhydro-D-fructose (AF) to 1,5-anhydro-D-glucitol. Has low NADPH-dependent reductase activity towards 9,10-phenanthrenequinone (in vitro). The polypeptide is 1,5-anhydro-D-fructose reductase (AKR1E2) (Homo sapiens (Human)).